Reading from the N-terminus, the 814-residue chain is Leucine-rich repeat-containing protein 41 (814 aa).

The tract at residues 45–54 (ALFELCGRAV) is interaction with Elongin BC complex. Ser155, Ser276, and Ser326 each carry phosphoserine. Positions 265–408 (LCGEASRGRA…KKGARTRQGC (144 aa)) are disordered. The residue at position 327 (Thr327) is a Phosphothreonine. Residues 354–385 (TKRPPSAPATTSSASASSSTSSSKRAPASSAP) are compositionally biased toward low complexity. Ser375 is subject to Phosphoserine. Over residues 389–403 (PLKRFKRAAGKKGAR) the composition is skewed to basic residues. LRR repeat units follow at residues 489–509 (WVSLESLTLSYNGLGSNIFRL), 520–532 (AGCRLRALHLSDL), 533–557 (FSPLPILELTRAIVRALPLLRVLSI), 615–637 (SGSLQQLSLDSATFASPQDFGLV), 638–661 (LQTLKEYNLTLKRLSFHDMNLADC), 703–730 (NSTLKGLRLPGNRLGNAGLLALADVFSE), and 733–754 (SSSLCQLDISSNCIKPDGLLEF).

Part of a E3 ubiquitin ligase complex with elongin BC complex (ELOB and ELOC), RBX1 and CUL5.

The chain is Leucine-rich repeat-containing protein 41 (LRRC41) from Bos taurus (Bovine).